A 78-amino-acid chain; its full sequence is MLVLSRKEGDQILIGDDIIIKVISIEKDCVKLGIDAPKNIKVLRYELLQEVKNENVEALQGKERLIRIKDLKGLFKDG.

Belongs to the CsrA/RsmA family. As to quaternary structure, homodimer; the beta-strands of each monomer intercalate to form a hydrophobic core, while the alpha-helices form wings that extend away from the core.

The protein localises to the cytoplasm. Its function is as follows. A translational regulator that binds mRNA to regulate translation initiation and/or mRNA stability. Usually binds in the 5'-UTR at or near the Shine-Dalgarno sequence preventing ribosome-binding, thus repressing translation. Its main target seems to be the major flagellin gene, while its function is anatagonized by FliW. The polypeptide is Translational regulator CsrA (Caldicellulosiruptor bescii (strain ATCC BAA-1888 / DSM 6725 / KCTC 15123 / Z-1320) (Anaerocellum thermophilum)).